A 64-amino-acid chain; its full sequence is Cytochrome c oxidase subunit 5C (64 aa).

The helical transmembrane segment at 16–34 (VVKELVIGFSLGLVAGGFW) threads the bilayer.

It belongs to the cytochrome c oxidase subunit 5C family. As to quaternary structure, sweet potato cytochrome C oxidase consists of at least seven different polypeptides species, subunits I, II, III, IV, Va, Vb, and Vc in order of MW.

It is found in the mitochondrion inner membrane. This protein is one of the nuclear-coded polypeptide chains of cytochrome c oxidase, the terminal oxidase in mitochondrial electron transport. This chain is Cytochrome c oxidase subunit 5C (COX5C), found in Ipomoea batatas (Sweet potato).